A 255-amino-acid chain; its full sequence is Pyrroloquinoline-quinone synthase (255 aa).

Belongs to the PqqC family.

The enzyme catalyses 6-(2-amino-2-carboxyethyl)-7,8-dioxo-1,2,3,4,7,8-hexahydroquinoline-2,4-dicarboxylate + 3 O2 = pyrroloquinoline quinone + 2 H2O2 + 2 H2O + H(+). It participates in cofactor biosynthesis; pyrroloquinoline quinone biosynthesis. Its function is as follows. Ring cyclization and eight-electron oxidation of 3a-(2-amino-2-carboxyethyl)-4,5-dioxo-4,5,6,7,8,9-hexahydroquinoline-7,9-dicarboxylic-acid to PQQ. The chain is Pyrroloquinoline-quinone synthase from Cereibacter sphaeroides (strain ATCC 17029 / ATH 2.4.9) (Rhodobacter sphaeroides).